The chain runs to 257 residues: UPF0246 protein Ssed_1188 (257 aa).

Belongs to the UPF0246 family.

The polypeptide is UPF0246 protein Ssed_1188 (Shewanella sediminis (strain HAW-EB3)).